The primary structure comprises 791 residues: RNA-directed RNA polymerase (791 aa).

In terms of domain architecture, RdRp catalytic spans 491–607 (PVAIGFDMKR…ICEKECAAVV (117 aa)).

It belongs to the tombusviridae RNA polymerase family.

Its subcellular location is the host mitochondrion. It carries out the reaction RNA(n) + a ribonucleoside 5'-triphosphate = RNA(n+1) + diphosphate. Its function is as follows. RNA-dependent RNA polymerase that plays an essential role in the virus replication. Induces the reorganization of host mitochondria and the formation of structures with numerous dilations surrounded by double membranes, which may provide a protected environment to viral replication. This chain is RNA-directed RNA polymerase, found in Melon necrotic spot virus (MNSV).